Here is a 307-residue protein sequence, read N- to C-terminus: MAKKKIAISCGDIQGVGLELILKSHKEVSALCEPLYLTDGELLERANQLLHNAYETKVLNALAIDAPLPLLNSSTIGKVSAQSGAYSFESFKKACELADSKEVDGICTLPINKLAWQQAQIPFVGHTDFLKQRYKDHQIIMMLGCSKLFVGLFSDHVPLGAVSQLIQVGALVKFLLAFQKSTQAKIVQVCGFNPHAGEEGLFGEEDERILKAIQKSNQTLGFECFLGPLPADSAFAPNKRKITPFYVSMSHDVGLAPLKALYFDESINVSLNAPILRTSTDHGTAFDIAYQNKANNKSYLNAIKYLA.

Residues histidine 126 and threonine 127 each coordinate substrate. A divalent metal cation is bound by residues histidine 156, histidine 195, and histidine 251. The substrate site is built by lysine 259, asparagine 268, and arginine 277.

The protein belongs to the PdxA family. As to quaternary structure, homodimer. Zn(2+) is required as a cofactor. The cofactor is Mg(2+). It depends on Co(2+) as a cofactor.

It localises to the cytoplasm. The catalysed reaction is 4-(phosphooxy)-L-threonine + NAD(+) = 3-amino-2-oxopropyl phosphate + CO2 + NADH. It functions in the pathway cofactor biosynthesis; pyridoxine 5'-phosphate biosynthesis; pyridoxine 5'-phosphate from D-erythrose 4-phosphate: step 4/5. Catalyzes the NAD(P)-dependent oxidation of 4-(phosphooxy)-L-threonine (HTP) into 2-amino-3-oxo-4-(phosphooxy)butyric acid which spontaneously decarboxylates to form 3-amino-2-oxopropyl phosphate (AHAP). This Helicobacter pylori (strain ATCC 700392 / 26695) (Campylobacter pylori) protein is 4-hydroxythreonine-4-phosphate dehydrogenase.